A 225-amino-acid chain; its full sequence is Fibronectin type III domain-containing protein 10 (225 aa).

The first 19 residues, 1-19 (MRAPPLLLLLAACAPPSGA), serve as a signal peptide directing secretion. At 20–181 (AVDPTPPGWE…FTAEPAAMQE (162 aa)) the chain is on the extracellular side. The Fibronectin type-III domain occupies 72–167 (LASAGGSLRA…ELAAAPPELA (96 aa)). N-linked (GlcNAc...) asparagine glycans are attached at residues Asn-86 and Asn-109. The chain crosses the membrane as a helical span at residues 182–202 (IVVAMTAVGGSICVMLVVICL). Over 203 to 225 (LVAYITENLMHPTFRRPSLRRQP) the chain is Cytoplasmic.

The protein resides in the membrane. This chain is Fibronectin type III domain-containing protein 10 (Fndc10), found in Rattus norvegicus (Rat).